The sequence spans 416 residues: Probable glucan 1,3-beta-glucosidase A (416 aa).

The first 21 residues, 1-21 (MLYNLSKAVLALSVLAASADA), serve as a signal peptide directing secretion. Catalysis depends on Glu-209, which acts as the Proton donor. 2 disulfides stabilise this stretch: Cys-290–Cys-415 and Cys-316–Cys-341. The active-site Nucleophile is Glu-308.

Belongs to the glycosyl hydrolase 5 (cellulase A) family. Monomer. The cofactor is Mn(2+).

It localises to the secreted. It catalyses the reaction Successive hydrolysis of beta-D-glucose units from the non-reducing ends of (1-&gt;3)-beta-D-glucans, releasing alpha-glucose.. Its function is as follows. Beta-glucanases participate in the metabolism of beta-glucan, the main structural component of the cell wall. It could also function biosynthetically as a transglycosylase. The protein is Probable glucan 1,3-beta-glucosidase A (exgA) of Aspergillus terreus (strain NIH 2624 / FGSC A1156).